A 301-amino-acid polypeptide reads, in one-letter code: Protein RESTRICTED TEV MOVEMENT 3 (301 aa).

The MATH domain maps to 6–134 (DKKITWTIKN…NGELKIVVEI (129 aa)). A coiled-coil region spans residues 235-289 (KLDWLEKKLYEVSEKKENEEASETGLQEMEEELKDMKQKCLEMEALVEKEKAKVS).

Self-interacts. Interacts with RTM1.

Its function is as follows. Required for the restriction of long-distance movement of the pathogenic tobacco etch virus (TEV) without causing a hypersensitive response or inducing systemic acquired resistance. The sequence is that of Protein RESTRICTED TEV MOVEMENT 3 (RTM3) from Arabidopsis thaliana (Mouse-ear cress).